A 3147-amino-acid polypeptide reads, in one-letter code: Bassianolide nonribosomal cyclodepsipeptide synthetase (3147 aa).

Over residues methionine 1–leucine 12 the composition is skewed to polar residues. Residues methionine 1–leucine 23 form a disordered region. The segment at histidine 69–serine 454 is condensation 1. The segment at aspartate 495–arginine 887 is adenylation 1. One can recognise a Carrier 1 domain in the interval proline 1015–serine 1091. Serine 1052 carries the O-(pantetheine 4'-phosphoryl)serine modification. Positions serine 1109–threonine 1538 are condensation 2. The segment at phenylalanine 1567 to arginine 1973 is adenylation 2. The interval threonine 2041–valine 2181 is S-adenosyl-L-methionine-dependent N-methyltransferase (MT). 2 Carrier domains span residues phenylalanine 2515 to leucine 2589 and alanine 2615 to glutamine 2689. Serine 2549 and serine 2649 each carry O-(pantetheine 4'-phosphoryl)serine. A condensation 3 region spans residues glutamine 2735–threonine 3139.

It belongs to the NRP synthetase family.

Functionally, bassianolide nonribosomal synthetase that mediates the biosynthesis of bassianolide (BSL), a non-ribosomal cyclodepsipeptide that shows insecticidal and cancer cell antiproliferative activity. BSLS first catalyzes the iterative synthesis of an enzyme-bound dipeptidol monomer intermediate from D-2-hydroxyisovalerate and L-leucine before performing the condensation and cyclization of 4 dipeptidol monomers to yield the cyclic tetrameric ester bassianolide. The N-methyltransferase MT domain is responsible for the methylation of the leucine residues of bassianolide. BSLS is flexible with both the amino acid and hydroxyl acid precursors, and produces bassianolide as the major product (containing N-methyl-L-Leu), together with small amounts of beauvericin and its analogs beauvericins A-C (containing N-methyl-L-Phe). This chain is Bassianolide nonribosomal cyclodepsipeptide synthetase, found in Beauveria bassiana (strain ARSEF 2860) (White muscardine disease fungus).